We begin with the raw amino-acid sequence, 73 residues long: Small ribosomal subunit protein bS18 (73 aa).

The protein belongs to the bacterial ribosomal protein bS18 family. In terms of assembly, part of the 30S ribosomal subunit. Forms a tight heterodimer with protein bS6.

In terms of biological role, binds as a heterodimer with protein bS6 to the central domain of the 16S rRNA, where it helps stabilize the platform of the 30S subunit. This is Small ribosomal subunit protein bS18 from Coxiella burnetii (strain Dugway 5J108-111).